The chain runs to 619 residues: 1-deoxy-D-xylulose-5-phosphate synthase (619 aa).

Residues His74 and 115–117 (GHS) each bind thiamine diphosphate. Mg(2+) is bound at residue Asp146. Thiamine diphosphate contacts are provided by residues 147-148 (GA), Asn175, Tyr285, and Glu365. Asn175 contacts Mg(2+).

This sequence belongs to the transketolase family. DXPS subfamily. As to quaternary structure, homodimer. It depends on Mg(2+) as a cofactor. The cofactor is thiamine diphosphate.

It catalyses the reaction D-glyceraldehyde 3-phosphate + pyruvate + H(+) = 1-deoxy-D-xylulose 5-phosphate + CO2. The protein operates within metabolic intermediate biosynthesis; 1-deoxy-D-xylulose 5-phosphate biosynthesis; 1-deoxy-D-xylulose 5-phosphate from D-glyceraldehyde 3-phosphate and pyruvate: step 1/1. Catalyzes the acyloin condensation reaction between C atoms 2 and 3 of pyruvate and glyceraldehyde 3-phosphate to yield 1-deoxy-D-xylulose-5-phosphate (DXP). The sequence is that of 1-deoxy-D-xylulose-5-phosphate synthase from Clostridium perfringens (strain 13 / Type A).